The sequence spans 305 residues: Ornithine carbamoyltransferase (305 aa).

Residues Ser52–Thr55, Gln79, Arg103, and His130–Gln133 contribute to the carbamoyl phosphate site. L-ornithine-binding positions include Asn162, Asp224, and Ser228 to Met229. Residues Cys264 to Leu265 and Arg292 each bind carbamoyl phosphate.

It belongs to the aspartate/ornithine carbamoyltransferase superfamily. OTCase family.

It is found in the cytoplasm. The catalysed reaction is carbamoyl phosphate + L-ornithine = L-citrulline + phosphate + H(+). Its pathway is amino-acid biosynthesis; L-arginine biosynthesis; L-arginine from L-ornithine and carbamoyl phosphate: step 1/3. In terms of biological role, reversibly catalyzes the transfer of the carbamoyl group from carbamoyl phosphate (CP) to the N(epsilon) atom of ornithine (ORN) to produce L-citrulline. The polypeptide is Ornithine carbamoyltransferase (Pyrobaculum islandicum (strain DSM 4184 / JCM 9189 / GEO3)).